A 355-amino-acid chain; its full sequence is UPF0421 protein BALH_2468 (355 aa).

A run of 4 helical transmembrane segments spans residues 19–39 (IAVF…IFAV), 74–94 (FTFF…FTIV), 109–129 (TLTA…AFLI), and 131–151 (LATT…ILPP).

It belongs to the UPF0421 family.

It is found in the cell membrane. This Bacillus thuringiensis (strain Al Hakam) protein is UPF0421 protein BALH_2468.